Reading from the N-terminus, the 216-residue chain is Probable GTP-binding protein EngB (216 aa).

One can recognise an EngB-type G domain in the interval 43–216 (DRIEVCFAGR…TLRSIIAHLD (174 aa)). GTP-binding positions include 51-58 (GRSNVGKS), 78-82 (GRTQE), 96-99 (DLPG), 163-166 (TKAD), and 197-199 (TSS). The Mg(2+) site is built by Ser58 and Thr80.

The protein belongs to the TRAFAC class TrmE-Era-EngA-EngB-Septin-like GTPase superfamily. EngB GTPase family. Requires Mg(2+) as cofactor.

Functionally, necessary for normal cell division and for the maintenance of normal septation. In Ruegeria sp. (strain TM1040) (Silicibacter sp.), this protein is Probable GTP-binding protein EngB.